We begin with the raw amino-acid sequence, 78 residues long: uncharacterized protein (78 aa).

The segment at 49 to 78 (QRASLERSNSIRNLQSQGKRRSDSKESRKL) is disordered. Residues 54-65 (ERSNSIRNLQSQ) show a composition bias toward polar residues. The span at 68-78 (RRSDSKESRKL) shows a compositional bias: basic and acidic residues.

This is an uncharacterized protein from Saccharomyces cerevisiae (strain ATCC 204508 / S288c) (Baker's yeast).